Consider the following 96-residue polypeptide: CRISPR-associated endoribonuclease Cas2 1 (96 aa).

Mg(2+) is bound at residue aspartate 8.

Belongs to the CRISPR-associated endoribonuclease Cas2 protein family. In terms of assembly, homodimer, forms a heterotetramer with a Cas1 homodimer. Requires Mg(2+) as cofactor.

Its function is as follows. CRISPR (clustered regularly interspaced short palindromic repeat), is an adaptive immune system that provides protection against mobile genetic elements (viruses, transposable elements and conjugative plasmids). CRISPR clusters contain sequences complementary to antecedent mobile elements and target invading nucleic acids. CRISPR clusters are transcribed and processed into CRISPR RNA (crRNA). Functions as a ssRNA-specific endoribonuclease. Involved in the integration of spacer DNA into the CRISPR cassette. The polypeptide is CRISPR-associated endoribonuclease Cas2 1 (Moorella thermoacetica (strain ATCC 39073 / JCM 9320)).